The chain runs to 144 residues: Dynein light chain Tctex-type protein 2B (144 aa).

Belongs to the dynein light chain Tctex-type family. In terms of assembly, light chain of the cytoplasmic dynein complex 2, a multisubunit complex composed at least of eleven different proteins. The cytoplasmic dynein 2 complex consists of two catalytic heavy chains (HCs) and a number of non-catalytic subunits presented by intermediate chains (ICs), light intermediate chains (LICs) and light chains (LCs). Among them, a heavy chain (DYNC2H1), two intermediate chains (DYNC2I2 and DYNC2I1), a light intermediate chain (DYNC2LI1), and a light chain (DYNLT2B) are unique to the dynein-2 complex, but a subset of the light chains are also shared by dynein-1 and dynein-2 complexes. The dimer DYNLT2B-DYNLT1/DYNLT3 interacts with DYNC2I1; this interaction is crucial for retrograde trafficking of ciliary proteins.

Its subcellular location is the dynein axonemal particle. In terms of biological role, acts as one of several non-catalytic accessory components of the cytoplasmic dynein 2 complex (dynein-2 complex), a motor protein complex that drives the movement of cargos along microtubules within cilia and flagella in concert with the intraflagellar transport (IFT) system. Required for proper retrograde ciliary transport. The chain is Dynein light chain Tctex-type protein 2B (Dynlt2b) from Mus musculus (Mouse).